A 477-amino-acid polypeptide reads, in one-letter code: Protein RdxB (477 aa).

The Cytoplasmic segment spans residues 1 to 29 (MTSPDTQTSSLYAKREPVFPKRVSGKFRS). A helical transmembrane segment spans residues 30–50 (LKWWIMGVTLGIYYIAPWLRW). At 51 to 81 (DRGPNLPDQAILVDLANRRFFFFMIEIWPHE) the chain is on the periplasmic side. The chain crosses the membrane as a helical span at residues 82 to 102 (FYFVAGLLIMAGLGLFLFTSA). Over 103-154 (AGRVWCGYACPQTVWTDLFILVERWVEGDRNARIRLLRQRWDLEKTRKYLTK) the chain is Cytoplasmic. A helical transmembrane segment spans residues 155-175 (WTLWLLIGLATGGAWVFYFTD). The Periplasmic portion of the chain corresponds to 176–189 (APTLLVDLLTGNAH). A helical membrane pass occupies residues 190–210 (PVAYITMATLTATTFAFGGFA). Residues 211 to 338 (REQICIYACP…SAWRHVFRLR (128 aa)) are Cytoplasmic-facing. The 4Fe-4S ferredoxin-type domain maps to 253–281 (EPLSPDQGDCIDCMACVNVCPMGIDIRDG). Positions 262, 265, 268, 272, 286, 289, 292, and 296 each coordinate [4Fe-4S] cluster. A helical membrane pass occupies residues 339-359 (TLIYTALWSGVGLALIVALFL). The Periplasmic portion of the chain corresponds to 360-477 (RSPIDINVTP…HDTIFNGRGN (118 aa)).

Requires [4Fe-4S] cluster as cofactor.

It localises to the cell membrane. Its function is as follows. Involved in a membrane generated redox signal; required to maintain repression of photosynthesis gene expression in the presence of oxygen. The protein is Protein RdxB (rdxB) of Cereibacter sphaeroides (strain ATCC 17023 / DSM 158 / JCM 6121 / CCUG 31486 / LMG 2827 / NBRC 12203 / NCIMB 8253 / ATH 2.4.1.) (Rhodobacter sphaeroides).